A 341-amino-acid chain; its full sequence is Chitin synthase 3 complex protein CSI2 (341 aa).

Residues 35–70 (SSSTKAADSSSKGSSSAKTTTSLGKSSVTSKDVSSS) show a composition bias toward low complexity. Disordered regions lie at residues 35 to 78 (SSST…SSTK), 272 to 291 (DSLS…GKFT), and 298 to 341 (NYTS…DGKE).

Appears to be a structural component of the chitin synthase 3 complex. The chain is Chitin synthase 3 complex protein CSI2 (CSI2) from Saccharomyces cerevisiae (strain ATCC 204508 / S288c) (Baker's yeast).